A 716-amino-acid polypeptide reads, in one-letter code: Leucine-rich repeat neuronal protein 1 (716 aa).

The N-terminal stretch at 1 to 25 is a signal peptide; sequence MARLSTGKAACQVVLGLLITSLTES. The 47-residue stretch at 26 to 72 folds into the LRRNT domain; that stretch reads SILTSECPQLCVCEIRPWFTPQSTYREATTVDCNDLRLTRIPGNLSS. The Extracellular segment spans residues 26–631; sequence SILTSECPQL…DISDHETSTA (606 aa). N69 carries an N-linked (GlcNAc...) asparagine glycan. 9 LRR repeats span residues 73-95, 96-117, 120-141, 144-165, 168-189, 192-213, 216-237, 240-261, and 264-285; these read DTQVLLLQSNNIAKTVDELQQLF, NLTELDFSQNNFTNIKEVGLAN, QLTTLHLEENQISEMTDYCLQD, NLQELYINHNQISTISANAFSG, NLLRLHLNSNKLKVIDSRWFDS, NLEILMIGENPVIGILDMNFRP, NLRSLVLAGMYLTDVPGNALVG, SLESLSFYDNKLIKVPQLALQK, and NLKFLDLNKNPIHKIQEGDFKN. N96 and N117 each carry an N-linked (GlcNAc...) asparagine glycan. Residues 371 to 424 form the LRRCT domain; it reads NPLRCDCVIHWINSNKTNIRFMEPLSMFCAMPPEYRGQQVKEVLIQDSSEQCLP. An N-linked (GlcNAc...) asparagine glycan is attached at N385. In terms of domain architecture, Ig-like C2-type spans 424-515; it reads PMISHDTFPN…GADTRVATIK (92 aa). The cysteines at positions 447 and 499 are disulfide-linked. The N-linked (GlcNAc...) asparagine glycan is linked to N517. The Fibronectin type-III domain maps to 525–619; it reads QVLKIYVKQT…VNVTTKTAAF (95 aa). The chain crosses the membrane as a helical span at residues 632–652; it reads LAAVMGSMFAVISLASIAIYI. At 653-716 the chain is on the cytoplasmic side; it reads AKRFKRKNYH…VDTSRSYYMW (64 aa). Residues 692 to 716 form a disordered region; sequence SDKDKDGSADTKPTQVDTSRSYYMW. The span at 702-716 shows a compositional bias: polar residues; the sequence is TKPTQVDTSRSYYMW.

As to expression, expressed in brain.

Its subcellular location is the membrane. The protein is Leucine-rich repeat neuronal protein 1 (Lrrn1) of Mus musculus (Mouse).